The primary structure comprises 321 residues: Citrate synthase (321 aa).

Catalysis depends on residues histidine 248 and aspartate 306.

Belongs to the citrate synthase family.

The enzyme catalyses oxaloacetate + acetyl-CoA + H2O = citrate + CoA + H(+). Its pathway is carbohydrate metabolism; tricarboxylic acid cycle; isocitrate from oxaloacetate: step 1/2. The sequence is that of Citrate synthase (gltA) from Bartonella elizabethae (Rochalimaea elizabethae).